We begin with the raw amino-acid sequence, 467 residues long: Syntaxin-5 (467 aa).

Disordered stretches follow at residues 1-53 (MQTR…QSLV) and 58-77 (GHEA…SIST). At 1-445 (MQTRRRLHQT…KYFQSVSKNR (445 aa)) the chain is on the cytoplasmic side. A compositionally biased stretch (low complexity) spans 10-22 (TDQQDYSSSSTYT). The span at 29–45 (GGAGAGSVGTGTAGGSV) shows a compositional bias: gly residues. Positions 68-77 (NYQSGDSIST) are enriched in polar residues. A coiled-coil region spans residues 245-269 (IKGDLNALNQQIARLQDISKDQRRH). The segment at 310–335 (QQKTRRDQFSQGPGPLAAHTVSPSTA) is disordered. The 63-residue stretch at 375 to 437 (DNYVQQRAET…EAAHGEILKY (63 aa)) folds into the t-SNARE coiled-coil homology domain. Residues 446 to 466 (WLMIKIFGVLIFFFLFFVVFM) form a helical; Anchor for type IV membrane protein membrane-spanning segment. A topological domain (vesicular) is located at residue Ser467.

It belongs to the syntaxin family. Homodimer.

It is found in the golgi apparatus. It localises to the cis-Golgi network membrane. Functionally, mediates endoplasmic reticulum to Golgi transport. This Drosophila melanogaster (Fruit fly) protein is Syntaxin-5.